The sequence spans 1070 residues: MLEDGKGGITTIPGLNQIQFEGFCRFIDQGLTEELYKFQKIEDIDQEIEFQLFAETYQLVEPLIKERDAVYDSLTYSSELYVSAGLIRKASKDMQEQKIFIGSIPIMNSLGTSIVNGIYRIVINQILQSPGIYYRSELDQNGISVYTGTIISDWGGRSELEIDRKARIWARVSRKQKISILVLSSAMGSNLREIIENVCYPEILLSFLRDKEKKKIGSKENAILEFYKKFACVGGDPLFSESLCKELQNKFFQQRCELGRIGRRNMNRRLHLDIPQNNTFLLPRDILEATDLLIGLKFGMGTLDDMNHLQNKRIRSVADLLQDKFGLALVRLENAVQGTICGAIHHKKIPTPQNLVTSTLLTTTYESFFGLHPLSQVLDRTNPLTQIVHARKVSSLGPGGLTGRTASFRIRDIHPSHYGRICPIDTSEGINVGLIGSLAIHVRIGNWGSLESPFFKISDRLTGVRVLHLSPGRDEYYMVAAGNSLALNQDIQEDLVVPARFRQEFLTIAWEQVNLRSIFPFQYFSIGTSLIPFIEHNDANRALMSSNMQRQAVPLAWSEKCIVGTGVERQAALDSGSLAIAEREGRVIYTDTEKILVSGDGKTISIPLVMYQRSNKNTCMYQQPQVRRGQFIKKGQILADGAATVEGELALGKSVLVAYMPWEGYNYEDAVLISECLVYEDIFTSFHIRKYEIQTHVTTQGPEKVTNEIPHLEAHLIRNLDKNGIVLQGSWVEPGDVLVGKLTPQVVKESSYAPEDRLLRAILGIQVSASKETCLKVPIGGRGRVIDVRWIQKKGGYGYNPEKIRVYILQKREIKVGDKVAGRHGNKGIISKILPRQDMPYLQDGRSVDLVFNPLGVPSRMNVGQIFECSLGLAGSLLDRHYRIAPFDERYEQEASRKIVFSELYEASKQTANPWAFEPEYPGKSRIFDGRTGNTFEHPVLIGKPYILKLIHQVDDKIHGRSSGHYALVTQQPLRGRAKQGGQRVGEMEVWALEGFGVAHILQEMLTYKSDHIRARQEVLGTTIVGGTIPNPKNAPESFRLLVRELRSLALELTHFLVSEKNFQVNKREA.

This sequence belongs to the RNA polymerase beta chain family. In terms of assembly, in plastids the minimal PEP RNA polymerase catalytic core is composed of four subunits: alpha, beta, beta', and beta''. When a (nuclear-encoded) sigma factor is associated with the core the holoenzyme is formed, which can initiate transcription.

The protein resides in the plastid. It carries out the reaction RNA(n) + a ribonucleoside 5'-triphosphate = RNA(n+1) + diphosphate. Functionally, DNA-dependent RNA polymerase catalyzes the transcription of DNA into RNA using the four ribonucleoside triphosphates as substrates. This chain is DNA-directed RNA polymerase subunit beta, found in Cuscuta exaltata (Tall dodder).